A 246-amino-acid polypeptide reads, in one-letter code: 1-(5-phosphoribosyl)-5-[(5-phosphoribosylamino)methylideneamino] imidazole-4-carboxamide isomerase (246 aa).

Catalysis depends on aspartate 7, which acts as the Proton acceptor. Catalysis depends on aspartate 129, which acts as the Proton donor.

Belongs to the HisA/HisF family.

The protein resides in the cytoplasm. The catalysed reaction is 1-(5-phospho-beta-D-ribosyl)-5-[(5-phospho-beta-D-ribosylamino)methylideneamino]imidazole-4-carboxamide = 5-[(5-phospho-1-deoxy-D-ribulos-1-ylimino)methylamino]-1-(5-phospho-beta-D-ribosyl)imidazole-4-carboxamide. It participates in amino-acid biosynthesis; L-histidine biosynthesis; L-histidine from 5-phospho-alpha-D-ribose 1-diphosphate: step 4/9. This chain is 1-(5-phosphoribosyl)-5-[(5-phosphoribosylamino)methylideneamino] imidazole-4-carboxamide isomerase, found in Shewanella sediminis (strain HAW-EB3).